A 415-amino-acid chain; its full sequence is MGSLGAILKHPDDFYPLLKLKIAARHAEKQIPSEPHWAFCYSMLHKVSRSFGLVIQQLGPQLRDAVCIFYLVLRALDTVEDDTSISTEVKVPILMAFHRHIYDNDWHFSCGTKEYKVLMDEFHHVSNAFLDLGSGYKEAIEDITMRMGAGMAKFICKEVETIDDYDEYCHYVAGLVGLGLSKLFHASGAEDLATDSLSNSMGLFLQKTNIIRDYLEDINEIPKSRMFWPRQIWSKYVDKLEDLKYEENSGKAVQCLNDMVTNALLHVEDCLKYMSDLRDPAIFRFCAIPQIMSIGTLALCYNNIQVFRGVVKMRRGLTAKVIDRTNTMSDVYGAFFDFSCMLKSKVDNNDPNATKTLSRLEAIQKICKNSGALTTKRKSYIIENESGYNSTLIVILFIILAILYAYLSSNLPNSL.

A run of 2 helical transmembrane segments spans residues 281–301 (AIFR…ALCY) and 392–412 (LIVI…SNLP).

It belongs to the phytoene/squalene synthase family. Requires Mg(2+) as cofactor. It depends on Mn(2+) as a cofactor.

It localises to the endoplasmic reticulum membrane. The catalysed reaction is 2 (2E,6E)-farnesyl diphosphate + NADH + H(+) = squalene + 2 diphosphate + NAD(+). The enzyme catalyses 2 (2E,6E)-farnesyl diphosphate + NADPH + H(+) = squalene + 2 diphosphate + NADP(+). It participates in terpene metabolism; lanosterol biosynthesis; lanosterol from farnesyl diphosphate: step 1/3. Its function is as follows. Component of the triterpene saponins (e.g. ginsenosides or panaxosides) and phytosterols biosynthetic pathways. Catalyzes the biosynthesis of squalene. In Panax ginseng (Korean ginseng), this protein is Squalene synthase 2.